The primary structure comprises 85 residues: UPF0291 protein SP_1473 (85 aa).

The tract at residues 62–85 is disordered; sequence TPEKLRQVQREKGLHGRSLDDPNS.

It belongs to the UPF0291 family.

It is found in the cytoplasm. This chain is UPF0291 protein SP_1473, found in Streptococcus pneumoniae serotype 4 (strain ATCC BAA-334 / TIGR4).